The chain runs to 49 residues: Large ribosomal subunit protein bL33B (49 aa).

Belongs to the bacterial ribosomal protein bL33 family.

This Bacillus licheniformis (strain ATCC 14580 / DSM 13 / JCM 2505 / CCUG 7422 / NBRC 12200 / NCIMB 9375 / NCTC 10341 / NRRL NRS-1264 / Gibson 46) protein is Large ribosomal subunit protein bL33B.